An 81-amino-acid chain; its full sequence is Sulfur carrier protein TusA (81 aa).

Residue Cys19 is the Cysteine persulfide intermediate of the active site.

The protein belongs to the sulfur carrier protein TusA family. In terms of assembly, interacts with IscS.

It localises to the cytoplasm. The protein operates within tRNA modification. In terms of biological role, sulfur carrier protein involved in sulfur trafficking in the cell. Part of a sulfur-relay system required for 2-thiolation during synthesis of 2-thiouridine of the modified wobble base 5-methylaminomethyl-2-thiouridine (mnm(5)s(2)U) in tRNA. Interacts with IscS and stimulates its cysteine desulfurase activity. Accepts an activated sulfur from IscS, which is then transferred to TusD, and thus determines the direction of sulfur flow from IscS to 2-thiouridine formation. Also appears to be involved in sulfur transfer for the biosynthesis of molybdopterin. The chain is Sulfur carrier protein TusA from Serratia proteamaculans (strain 568).